Here is a 459-residue protein sequence, read N- to C-terminus: NADH oxidase (459 aa).

Asn-10 provides a ligand contact to FAD. The active-site Proton acceptor is the His-11. Residues Ala-12, Asp-34, Gln-35, Cys-44, Val-81, Ala-110, Ser-113, Lys-143, and Tyr-172 each contribute to the FAD site. The Redox-active role is filled by Cys-44. Residue Cys-44 is modified to Cysteine sulfinic acid (-SO2H). Residues Ile-173, Asp-192, Tyr-201, and Gly-256 each contribute to the NAD(+) site. Asp-294 is an FAD binding site. Ala-310 provides a ligand contact to NAD(+). FAD contacts are provided by Leu-311, Ala-312, and Ser-313. Gly-341 provides a ligand contact to NAD(+). Phe-439 serves as a coordination point for FAD.

The protein belongs to the class-III pyridine nucleotide-disulfide oxidoreductase family. The cofactor is FAD.

It is found in the secreted. Its subcellular location is the cell wall. The enzyme catalyses 2 NADH + O2 + 2 H(+) = 2 NAD(+) + 2 H2O. In terms of biological role, catalyzes the four-electron reduction of molecular oxygen to water. Plays a role in redox balance maintenance. May be involved in mediating bacterial adhesion to host cells. May be considered a potential virulence factor. This is NADH oxidase from Streptococcus pneumoniae serotype 4 (strain ATCC BAA-334 / TIGR4).